The primary structure comprises 288 residues: Ankyrin repeat and SOCS box protein 8 (288 aa).

S17 bears the Phosphoserine mark. ANK repeat units follow at residues 52 to 81, 85 to 113, 117 to 146, and 150 to 179; these read GTLK…EVNA, YNRT…NPNA, NRDT…SVNA, and NNDT…EVRV. Residues 235 to 288 enclose the SOCS box domain; sequence QLCEKLTVLCSAPGTLKTLARYTVRRSLGLQYLPDAVKGLPLPASLKEYLLLLE.

This sequence belongs to the ankyrin SOCS box (ASB) family. As to quaternary structure, interacts with TBK1; this interaction promotes TBK1 proteasomal degradation. Phosphorylated by TBK1.

The protein localises to the cytoplasm. Its pathway is protein modification; protein ubiquitination. Its function is as follows. May be a substrate-recognition component of a SCF-like ECS (Elongin-Cullin-SOCS-box protein) E3 ubiquitin-protein ligase complex which mediates the ubiquitination and subsequent proteasomal degradation of target proteins. Inhibits IFN-beta production through the IRF3 signaling pathway by targeting TBK1 via 'Lys-48'-linked ubiquitination, leading to its proteasomal degradation. The protein is Ankyrin repeat and SOCS box protein 8 (ASB8) of Pongo abelii (Sumatran orangutan).